A 695-amino-acid chain; its full sequence is Probable glutamine--tRNA ligase (695 aa).

The 'HIGH' region signature appears at 201 to 211; sequence PEPNGILHIGH. Residues 202 to 204 and 208 to 214 each bind ATP; these read EPN and HIGHAKA. Asp-234 and Tyr-391 together coordinate L-glutamine. ATP contacts are provided by residues Thr-410, 439–440, and 447–449; these read RL and LSK. The 'KMSKS' region motif lies at 446 to 450; sequence VLSKR.

This sequence belongs to the class-I aminoacyl-tRNA synthetase family.

The catalysed reaction is tRNA(Gln) + L-glutamine + ATP = L-glutaminyl-tRNA(Gln) + AMP + diphosphate. The protein is Probable glutamine--tRNA ligase of Vairimorpha ceranae (strain BRL01) (Microsporidian parasite).